Reading from the N-terminus, the 530-residue chain is Developmental and secondary metabolism regulator VEL1 (530 aa).

The region spanning Asn-26–Arg-220 is the Velvet domain. A Nuclear localization signal motif is present at residues Glu-40–Cys-45. Residues Leu-206–Asp-516 are disordered. A compositionally biased stretch (basic and acidic residues) spans Phe-244 to Arg-253. The span at Tyr-295–Glu-305 shows a compositional bias: pro residues. Polar residues predominate over residues Tyr-347–Ser-356. Basic and acidic residues predominate over residues Val-380–Gln-389. Positions Ser-390–Thr-404 are enriched in low complexity. Residues Ser-415–Pro-426 are compositionally biased toward pro residues. The PEST stretch occupies residues Met-429–Ala-460. Positions Phe-478–Arg-490 are enriched in polar residues.

Belongs to the velvet family. VeA subfamily. In terms of assembly, component of the heterotrimeric velvet complex composed of LAE1, VEL1 and VEL2; VEL1 acting as a bridging protein between LAE1 and VEL2. Interacts with LAE1.

The protein localises to the nucleus. It localises to the cytoplasm. Component of the velvet transcription factor complex that controls sexual/asexual developmental ratio in response to light, promoting sexual development in the darkness while stimulating asexual sporulation under illumination. The velvet complex hat acts as a global regulator for secondary metabolite gene expression. Controls positively the expression of the gibberellins, fumonisins and fusarin C gene clusters. Controls the expression of the fusaric acid gene cluster. Controls negatively the expression of the bikaverin gene cluster. Regulates the expression of laeA. Plays a crucial role in virulence. The sequence is that of Developmental and secondary metabolism regulator VEL1 from Gibberella fujikuroi (strain CBS 195.34 / IMI 58289 / NRRL A-6831) (Bakanae and foot rot disease fungus).